The sequence spans 290 residues: Acetylglutamate kinase (290 aa).

Substrate contacts are provided by residues 64-65 (GG), arginine 86, and asparagine 183.

Belongs to the acetylglutamate kinase family. ArgB subfamily.

It localises to the cytoplasm. The catalysed reaction is N-acetyl-L-glutamate + ATP = N-acetyl-L-glutamyl 5-phosphate + ADP. It functions in the pathway amino-acid biosynthesis; L-arginine biosynthesis; N(2)-acetyl-L-ornithine from L-glutamate: step 2/4. Its function is as follows. Catalyzes the ATP-dependent phosphorylation of N-acetyl-L-glutamate. This chain is Acetylglutamate kinase, found in Halothermothrix orenii (strain H 168 / OCM 544 / DSM 9562).